A 295-amino-acid chain; its full sequence is 4-hydroxybenzoate octaprenyltransferase (295 aa).

A run of 8 helical transmembrane segments spans residues 28–48 (PIGIYLLLWPTLWAVWIAADG), 55–75 (VLIFTCGVILMRSAGCVINDF), 103–123 (WALFAVLVALSFGLVLLTDPF), 147–167 (LPQLVLGAAYSWGIPMAFTAA), 175–195 (AWLIFAANLAWTVAYDTYYAM), 219–239 (AIILALQGLTLGLLLVVGMRL), 241–261 (LGPYFHLGLLVAALCFAWEFV), and 275–295 (FLHNHWAGLAILVGLILDYGI).

This sequence belongs to the UbiA prenyltransferase family. It depends on Mg(2+) as a cofactor.

The protein resides in the cell inner membrane. The catalysed reaction is all-trans-octaprenyl diphosphate + 4-hydroxybenzoate = 4-hydroxy-3-(all-trans-octaprenyl)benzoate + diphosphate. It functions in the pathway cofactor biosynthesis; ubiquinone biosynthesis. Functionally, catalyzes the prenylation of para-hydroxybenzoate (PHB) with an all-trans polyprenyl group. Mediates the second step in the final reaction sequence of ubiquinone-8 (UQ-8) biosynthesis, which is the condensation of the polyisoprenoid side chain with PHB, generating the first membrane-bound Q intermediate 3-octaprenyl-4-hydroxybenzoate. The polypeptide is 4-hydroxybenzoate octaprenyltransferase (Azotobacter vinelandii (strain DJ / ATCC BAA-1303)).